The chain runs to 595 residues: (E)-beta-ocimene synthase, chloroplastic (595 aa).

A chloroplast-targeting transit peptide spans 1–32 (MSTISINLMSIIRNPLHSKSKRALINKHPSSS). D350 and D354 together coordinate Mn(2+). Residues 350–354 (DDVYD) carry the DDXXD motif motif. Homodimerization stretches follow at residues 356–362 (YGTLDEL) and 428–465 (EEEWYESGYTPSLKEYLNNASISVGAIAVVIALELSIP). Mn(2+) contacts are provided by N493 and E501.

The protein belongs to the terpene synthase family. Homodimer. Mn(2+) is required as a cofactor. Mg(2+) serves as cofactor. In terms of tissue distribution, expressed in peltate glandular trichomes. Present in flowers, leaves and stems.

It localises to the plastid. Its subcellular location is the chloroplast. It catalyses the reaction (2E)-geranyl diphosphate = (E)-beta-ocimene + diphosphate. It functions in the pathway secondary metabolite biosynthesis; terpenoid biosynthesis. Its function is as follows. Involved in the biosynthesis of monoterpenes natural products. Monoterpene synthase that catalyzes mainly the formation of (E)-beta-ocimene and minor amounts of other monoterpenes (e.g. myrcene, (Z)-beta-ocimene, alpha- and gamma-terpinene) from geranyl diphosphate (GPP). The polypeptide is (E)-beta-ocimene synthase, chloroplastic (Origanum vulgare (Wild marjoram)).